The chain runs to 240 residues: Phosphoribosylaminoimidazole-succinocarboxamide synthase (240 aa).

This sequence belongs to the SAICAR synthetase family.

The enzyme catalyses 5-amino-1-(5-phospho-D-ribosyl)imidazole-4-carboxylate + L-aspartate + ATP = (2S)-2-[5-amino-1-(5-phospho-beta-D-ribosyl)imidazole-4-carboxamido]succinate + ADP + phosphate + 2 H(+). The protein operates within purine metabolism; IMP biosynthesis via de novo pathway; 5-amino-1-(5-phospho-D-ribosyl)imidazole-4-carboxamide from 5-amino-1-(5-phospho-D-ribosyl)imidazole-4-carboxylate: step 1/2. The polypeptide is Phosphoribosylaminoimidazole-succinocarboxamide synthase (Limosilactobacillus fermentum (strain NBRC 3956 / LMG 18251) (Lactobacillus fermentum)).